Here is a 126-residue protein sequence, read N- to C-terminus: Interleukin-18-binding protein (126 aa).

An N-terminal signal peptide occupies residues 1–20 (MRILFLIAFMYGCVHPYVNA).

The protein belongs to the orthopoxvirus OPG022 family.

It localises to the secreted. Functionally, soluble IL18-binding protein that may modulate the host antiviral response. This Bos taurus (Bovine) protein is Interleukin-18-binding protein (OPG022).